We begin with the raw amino-acid sequence, 468 residues long: 6-phospho-beta-galactosidase (468 aa).

D-galactose 6-phosphate-binding residues include Gln-19, His-116, Asn-159, Glu-160, and Asn-297. Glu-160 functions as the Proton donor in the catalytic mechanism. Glu-375 acts as the Nucleophile in catalysis. The D-galactose 6-phosphate site is built by Ser-428, Trp-429, Lys-435, and Tyr-437.

It belongs to the glycosyl hydrolase 1 family.

It catalyses the reaction a 6-phospho-beta-D-galactoside + H2O = D-galactose 6-phosphate + an alcohol. Its pathway is carbohydrate metabolism; lactose degradation; D-galactose 6-phosphate and beta-D-glucose from lactose 6-phosphate: step 1/1. This is 6-phospho-beta-galactosidase from Streptococcus pyogenes serotype M28 (strain MGAS6180).